The sequence spans 228 residues: ATP-dependent dethiobiotin synthetase BioD (228 aa).

An ATP-binding site is contributed by 12–17 (EIGKTT). Thr-16 contacts Mg(2+). The active site involves Lys-37. Ser-41 serves as a coordination point for substrate. ATP is bound by residues Asp-54, 116-119 (EGAG), and 205-207 (PRL). The Mg(2+) site is built by Asp-54 and Glu-116.

The protein belongs to the dethiobiotin synthetase family. In terms of assembly, homodimer. Requires Mg(2+) as cofactor.

The protein resides in the cytoplasm. It carries out the reaction (7R,8S)-7,8-diammoniononanoate + CO2 + ATP = (4R,5S)-dethiobiotin + ADP + phosphate + 3 H(+). It functions in the pathway cofactor biosynthesis; biotin biosynthesis; biotin from 7,8-diaminononanoate: step 1/2. In terms of biological role, catalyzes a mechanistically unusual reaction, the ATP-dependent insertion of CO2 between the N7 and N8 nitrogen atoms of 7,8-diaminopelargonic acid (DAPA, also called 7,8-diammoniononanoate) to form a ureido ring. This is ATP-dependent dethiobiotin synthetase BioD from Pseudomonas paraeruginosa (strain DSM 24068 / PA7) (Pseudomonas aeruginosa (strain PA7)).